The chain runs to 225 residues: Agamous-like MADS-box protein TM6 (225 aa).

Residues 1-61 (MGRGKIEIKR…GKFHEYTSPT (61 aa)) enclose the MADS-box domain. Positions 84 to 174 (YERMQENLRK…LLNFEAKCDD (91 aa)) constitute a K-box domain.

Expressed during flower development in stamens, petals and carpels. Expressed in fruits and seeds.

It localises to the nucleus. Its function is as follows. Probable transcription factor involved in flower development. This Vitis vinifera (Grape) protein is Agamous-like MADS-box protein TM6.